The following is a 259-amino-acid chain: Deoxyribose-phosphate aldolase (259 aa).

The active-site Proton donor/acceptor is Asp-102. Catalysis depends on Lys-167, which acts as the Schiff-base intermediate with acetaldehyde. Lys-201 functions as the Proton donor/acceptor in the catalytic mechanism.

It belongs to the DeoC/FbaB aldolase family. DeoC type 2 subfamily.

The protein resides in the cytoplasm. The catalysed reaction is 2-deoxy-D-ribose 5-phosphate = D-glyceraldehyde 3-phosphate + acetaldehyde. It participates in carbohydrate degradation; 2-deoxy-D-ribose 1-phosphate degradation; D-glyceraldehyde 3-phosphate and acetaldehyde from 2-deoxy-alpha-D-ribose 1-phosphate: step 2/2. In terms of biological role, catalyzes a reversible aldol reaction between acetaldehyde and D-glyceraldehyde 3-phosphate to generate 2-deoxy-D-ribose 5-phosphate. This Serratia proteamaculans (strain 568) protein is Deoxyribose-phosphate aldolase.